The primary structure comprises 398 residues: Bifunctional enzyme IspD/IspF (398 aa).

The interval 1-234 is 2-C-methyl-D-erythritol 4-phosphate cytidylyltransferase; the sequence is MANSRRTAAI…SRLAALLGDI (234 aa). Residues 235–398 are 2-C-methyl-D-erythritol 2,4-cyclodiphosphate synthase; that stretch reads RTGTGYDVHA…LPWGPNGLSG (164 aa). Asp-241 and His-243 together coordinate a divalent metal cation. 4-CDP-2-C-methyl-D-erythritol 2-phosphate contacts are provided by residues 241-243 and 267-268; these read DVH and HS. His-275 provides a ligand contact to a divalent metal cation. Residues 289 to 291, 365 to 368, Phe-372, and Arg-375 each bind 4-CDP-2-C-methyl-D-erythritol 2-phosphate; these read DIG and TTSE.

The protein in the N-terminal section; belongs to the IspD/TarI cytidylyltransferase family. IspD subfamily. In the C-terminal section; belongs to the IspF family. It depends on a divalent metal cation as a cofactor.

It catalyses the reaction 2-C-methyl-D-erythritol 4-phosphate + CTP + H(+) = 4-CDP-2-C-methyl-D-erythritol + diphosphate. The enzyme catalyses 4-CDP-2-C-methyl-D-erythritol 2-phosphate = 2-C-methyl-D-erythritol 2,4-cyclic diphosphate + CMP. The protein operates within isoprenoid biosynthesis; isopentenyl diphosphate biosynthesis via DXP pathway; isopentenyl diphosphate from 1-deoxy-D-xylulose 5-phosphate: step 2/6. It functions in the pathway isoprenoid biosynthesis; isopentenyl diphosphate biosynthesis via DXP pathway; isopentenyl diphosphate from 1-deoxy-D-xylulose 5-phosphate: step 4/6. In terms of biological role, bifunctional enzyme that catalyzes the formation of 4-diphosphocytidyl-2-C-methyl-D-erythritol from CTP and 2-C-methyl-D-erythritol 4-phosphate (MEP) (IspD), and catalyzes the conversion of 4-diphosphocytidyl-2-C-methyl-D-erythritol 2-phosphate (CDP-ME2P) to 2-C-methyl-D-erythritol 2,4-cyclodiphosphate (ME-CPP) with a corresponding release of cytidine 5-monophosphate (CMP) (IspF). The polypeptide is Bifunctional enzyme IspD/IspF (Rhodopseudomonas palustris (strain BisA53)).